We begin with the raw amino-acid sequence, 159 residues long: Na(+)/H(+) antiporter subunit E1 (159 aa).

4 helical membrane passes run 1 to 21 (MAVQ…VTNS), 27 to 47 (FVLG…VLPG), 49 to 69 (FYVI…IELI), and 101 to 121 (WQIV…VLGV).

It belongs to the CPA3 antiporters (TC 2.A.63) subunit E family. As to quaternary structure, may form a heterooligomeric complex that consists of seven subunits: mnhA1, mnhB1, mnhC1, mnhD1, mnhE1, mnhF1 and mnhG1.

Its subcellular location is the cell membrane. Mnh complex is a Na(+)/H(+) antiporter involved in Na(+) excretion. In Staphylococcus aureus (strain bovine RF122 / ET3-1), this protein is Na(+)/H(+) antiporter subunit E1 (mnhE1).